We begin with the raw amino-acid sequence, 248 residues long: MSSAPNGRKNRPRTAGTIFQIGGKAPSRESERRESSEALLAVSDCRMVVQEFNTLVALYRELVISIGEISADCPSLRAEMHKTRTKGCEMARTAHQNLSAISGPEDGEIHPEICRLFIQLQCCLEMYLTEMLKSVCLLGSLQLHRKGKHYLGATKLDSRKEDSSDIPILEDTSSTPPDCPHTYFLVATDIENIERDMTEMKNLLSKLRETMPLPLKNQDDSSLLNLAPYPMVRQRKRRFFGLCCLVSS.

Positions 1 to 32 are disordered; the sequence is MSSAPNGRKNRPRTAGTIFQIGGKAPSRESER. Residues Cys243 and Cys244 are each lipidated (S-palmitoyl cysteine).

Belongs to the RGS7BP/RGS9BP family. Post-translationally, palmitoylated. Undergoes rapid palmitoylation turnover. Palmitoylation regulates the cell membrane and nuclear shuttling and the regulation of GPCR signaling. Upon depalmitoylation, it is targeted from the plasma membrane into the nucleus. GPCR signaling inhibits depalmitoylation and promotes localization to the plasma membrane.

The protein resides in the nucleus. It is found in the cytoplasm. The protein localises to the cell membrane. Regulator of G protein-coupled receptor (GPCR) signaling. Regulatory subunit of the R7-Gbeta5 complexes that acts by controlling the subcellular location of the R7-Gbeta5 complexes. When palmitoylated, it targets the R7-Gbeta5 complexes to the plasma membrane, leading to inhibit G protein alpha subunits. When it is unpalmitoylated, the R7-Gbeta5 complexes undergo a nuclear/cytoplasmic shuttling. The polypeptide is Regulator of G-protein signaling 7-binding protein A (rgs7bpa) (Danio rerio (Zebrafish)).